Reading from the N-terminus, the 241-residue chain is 3-deoxy-manno-octulosonate cytidylyltransferase (241 aa).

The protein belongs to the KdsB family.

The protein resides in the cytoplasm. The enzyme catalyses 3-deoxy-alpha-D-manno-oct-2-ulosonate + CTP = CMP-3-deoxy-beta-D-manno-octulosonate + diphosphate. It participates in nucleotide-sugar biosynthesis; CMP-3-deoxy-D-manno-octulosonate biosynthesis; CMP-3-deoxy-D-manno-octulosonate from 3-deoxy-D-manno-octulosonate and CTP: step 1/1. The protein operates within bacterial outer membrane biogenesis; lipopolysaccharide biosynthesis. In terms of biological role, activates KDO (a required 8-carbon sugar) for incorporation into bacterial lipopolysaccharide in Gram-negative bacteria. The chain is 3-deoxy-manno-octulosonate cytidylyltransferase from Rickettsia rickettsii (strain Sheila Smith).